A 442-amino-acid chain; its full sequence is UDP-N-acetylmuramate--L-alanine ligase (442 aa).

Position 109-115 (109-115 (GAHGKTS)) interacts with ATP.

It belongs to the MurCDEF family.

The protein localises to the cytoplasm. The enzyme catalyses UDP-N-acetyl-alpha-D-muramate + L-alanine + ATP = UDP-N-acetyl-alpha-D-muramoyl-L-alanine + ADP + phosphate + H(+). It participates in cell wall biogenesis; peptidoglycan biosynthesis. Its function is as follows. Cell wall formation. The chain is UDP-N-acetylmuramate--L-alanine ligase from Streptococcus pyogenes serotype M18 (strain MGAS8232).